Consider the following 82-residue polypeptide: Turripeptide OL139 (82 aa).

The interval 58-82 (HRTTRDTADKTHGGSQRDRFFQSIA) is disordered.

In terms of processing, contains 6 disulfide bonds. In terms of tissue distribution, expressed by the venom duct.

It is found in the secreted. In terms of biological role, acts as a neurotoxin by inhibiting an ion channel. This is Turripeptide OL139 from Iotyrris olangoensis (Sea snail).